The sequence spans 199 residues: Large ribosomal subunit protein bL25 (199 aa).

It belongs to the bacterial ribosomal protein bL25 family. CTC subfamily. Part of the 50S ribosomal subunit; part of the 5S rRNA/L5/L18/L25 subcomplex. Contacts the 5S rRNA. Binds to the 5S rRNA independently of L5 and L18.

In terms of biological role, this is one of the proteins that binds to the 5S RNA in the ribosome where it forms part of the central protuberance. In Syntrophobacter fumaroxidans (strain DSM 10017 / MPOB), this protein is Large ribosomal subunit protein bL25.